The following is a 264-amino-acid chain: Tryptophan synthase alpha chain (264 aa).

Catalysis depends on proton acceptor residues E49 and D60.

It belongs to the TrpA family. In terms of assembly, tetramer of two alpha and two beta chains.

The catalysed reaction is (1S,2R)-1-C-(indol-3-yl)glycerol 3-phosphate + L-serine = D-glyceraldehyde 3-phosphate + L-tryptophan + H2O. It functions in the pathway amino-acid biosynthesis; L-tryptophan biosynthesis; L-tryptophan from chorismate: step 5/5. The alpha subunit is responsible for the aldol cleavage of indoleglycerol phosphate to indole and glyceraldehyde 3-phosphate. In Geobacter sulfurreducens (strain ATCC 51573 / DSM 12127 / PCA), this protein is Tryptophan synthase alpha chain.